Reading from the N-terminus, the 514-residue chain is ATP synthase subunit alpha (514 aa).

An ATP-binding site is contributed by 170–177 (GDRQIGKT).

This sequence belongs to the ATPase alpha/beta chains family. In terms of assembly, F-type ATPases have 2 components, CF(1) - the catalytic core - and CF(0) - the membrane proton channel. CF(1) has five subunits: alpha(3), beta(3), gamma(1), delta(1), epsilon(1). CF(0) has three main subunits: a(1), b(2) and c(9-12). The alpha and beta chains form an alternating ring which encloses part of the gamma chain. CF(1) is attached to CF(0) by a central stalk formed by the gamma and epsilon chains, while a peripheral stalk is formed by the delta and b chains.

It localises to the cell inner membrane. It catalyses the reaction ATP + H2O + 4 H(+)(in) = ADP + phosphate + 5 H(+)(out). In terms of biological role, produces ATP from ADP in the presence of a proton gradient across the membrane. The alpha chain is a regulatory subunit. The polypeptide is ATP synthase subunit alpha (Pseudomonas syringae pv. tomato (strain ATCC BAA-871 / DC3000)).